A 285-amino-acid polypeptide reads, in one-letter code: 2-dehydro-3-deoxyphosphooctonate aldolase (285 aa).

This sequence belongs to the KdsA family.

The protein resides in the cytoplasm. It carries out the reaction D-arabinose 5-phosphate + phosphoenolpyruvate + H2O = 3-deoxy-alpha-D-manno-2-octulosonate-8-phosphate + phosphate. The protein operates within carbohydrate biosynthesis; 3-deoxy-D-manno-octulosonate biosynthesis; 3-deoxy-D-manno-octulosonate from D-ribulose 5-phosphate: step 2/3. It functions in the pathway bacterial outer membrane biogenesis; lipopolysaccharide biosynthesis. The chain is 2-dehydro-3-deoxyphosphooctonate aldolase from Acinetobacter baylyi (strain ATCC 33305 / BD413 / ADP1).